The sequence spans 268 residues: Glucosamine-6-phosphate deaminase (268 aa).

Catalysis depends on aspartate 72, which acts as the Proton acceptor; for enolization step. The For ring-opening step role is filled by aspartate 141. The active-site Proton acceptor; for ring-opening step is histidine 143. The For ring-opening step role is filled by glutamate 148.

The protein belongs to the glucosamine/galactosamine-6-phosphate isomerase family. NagB subfamily.

The enzyme catalyses alpha-D-glucosamine 6-phosphate + H2O = beta-D-fructose 6-phosphate + NH4(+). It participates in amino-sugar metabolism; N-acetylneuraminate degradation; D-fructose 6-phosphate from N-acetylneuraminate: step 5/5. With respect to regulation, allosterically activated by N-acetylglucosamine 6-phosphate (GlcNAc6P). Catalyzes the reversible isomerization-deamination of glucosamine 6-phosphate (GlcN6P) to form fructose 6-phosphate (Fru6P) and ammonium ion. The sequence is that of Glucosamine-6-phosphate deaminase from Borrelia garinii subsp. bavariensis (strain ATCC BAA-2496 / DSM 23469 / PBi) (Borreliella bavariensis).